A 1038-amino-acid chain; its full sequence is Kinesin-like protein KIN-5B (1038 aa).

The interval M1–M63 is disordered. Over residues R24–W34 the composition is skewed to basic and acidic residues. A compositionally biased stretch (gly residues) spans G49–S61. In terms of domain architecture, Kinesin motor spans N69 to I410. An ATP-binding site is contributed by G154–T161. Residues Q453–N502 are a coiled coil. A disordered region spans residues D1013–K1038.

This sequence belongs to the TRAFAC class myosin-kinesin ATPase superfamily. Kinesin family. KIN-5/BimC subfamily.

It is found in the cytoplasm. The protein localises to the cytoskeleton. The protein resides in the spindle. In terms of biological role, responsible for microtubule translocation. May be important for the organization of phragmoplast-specific arrays of microtubules. Plays an essential role in stabilizing the mitotic spindle. Required during mitotic cytokinesis. The chain is Kinesin-like protein KIN-5B from Oryza sativa subsp. japonica (Rice).